Reading from the N-terminus, the 527-residue chain is Triostin synthetase I (527 aa).

Residue 187-188 participates in ATP binding; the sequence is GG. 230–231 is a binding site for substrate; sequence HQ. ATP-binding positions include 300–302, D406, R421, and K512; that span reads SAP. K512 contributes to the substrate binding site.

The protein belongs to the ATP-dependent AMP-binding enzyme family. As to quaternary structure, monomer.

Functionally, involved in triostin biosynthesis. Activates quinoxaline-2-carboxylic acid (QA) via catalysis of the ATP-pyrophosphate exchange reaction dependent on QA, and the formation of the corresponding adenylate. Also activates structural analogs of QA such as quinoline-2-carboxylic acid and thieno[3,2-b]pyridine-5-carboxylic acid, but not quinoline-3-carboxylic acid, quinoline-4-carboxylic acid, pyridine-2-carboxylic acid or 2-pyrazinecarboxylic acid. The polypeptide is Triostin synthetase I (trsA) (Streptomyces triostinicus).